The chain runs to 837 residues: Translation initiation factor IF-2 (837 aa).

Disordered stretches follow at residues 1 to 44 and 62 to 251; these read MTEK…VRKS and KAQE…TKPA. 2 stretches are compositionally biased toward basic and acidic residues: residues 62–102 and 111–165; these read KAQE…EAKP and ADPE…HNDS. Positions 189–205 are enriched in basic residues; sequence RENHIRTGKNKVTKAKK. A compositionally biased stretch (basic and acidic residues) spans 206 to 229; that stretch reads GGRDDNGSKDERSADRRNQKDMRG. A compositionally biased stretch (polar residues) spans 242–251; sequence TLQQAFTKPA. A tr-type G domain is found at 337-506; that stretch reads QRAPVVTIMG…LLQSEVLELT (170 aa). The tract at residues 346 to 353 is G1; the sequence is GHVDHGKT. 346-353 is a GTP binding site; that stretch reads GHVDHGKT. The G2 stretch occupies residues 371 to 375; that stretch reads GITQH. Residues 392–395 form a G3 region; it reads DTPG. GTP-binding positions include 392 to 396 and 446 to 449; these read DTPGH and NKID. The tract at residues 446–449 is G4; sequence NKID. Residues 482-484 form a G5 region; the sequence is SAK.

This sequence belongs to the TRAFAC class translation factor GTPase superfamily. Classic translation factor GTPase family. IF-2 subfamily.

It is found in the cytoplasm. Functionally, one of the essential components for the initiation of protein synthesis. Protects formylmethionyl-tRNA from spontaneous hydrolysis and promotes its binding to the 30S ribosomal subunits. Also involved in the hydrolysis of GTP during the formation of the 70S ribosomal complex. The chain is Translation initiation factor IF-2 from Actinobacillus succinogenes (strain ATCC 55618 / DSM 22257 / CCUG 43843 / 130Z).